Reading from the N-terminus, the 214-residue chain is Large ribosomal subunit protein bL25 (214 aa).

Belongs to the bacterial ribosomal protein bL25 family. CTC subfamily. In terms of assembly, part of the 50S ribosomal subunit; part of the 5S rRNA/L5/L18/L25 subcomplex. Contacts the 5S rRNA. Binds to the 5S rRNA independently of L5 and L18.

This is one of the proteins that binds to the 5S RNA in the ribosome where it forms part of the central protuberance. This is Large ribosomal subunit protein bL25 from Polynucleobacter necessarius subsp. necessarius (strain STIR1).